The sequence spans 444 residues: Exopolygalacturonase clone GBGA483 (444 aa).

An N-terminal signal peptide occupies residues 1-23 (MVGSHKASGVLLVLLVVMATTIA). PbH1 repeat units follow at residues 220 to 246 (CKNITLSDIGIDAPPESLNTDGIHIGR), 247 to 268 (SNGVNLIGAKIKTGDDCVSIGD), 270 to 290 (TENLIVENVECGPGHGISIGS), 300 to 321 (VKGVTVRKCLIKNTDNGVRIKT), and 330 to 351 (ASNILFEDITMDNVSLPVLIDQ). N-linked (GlcNAc...) asparagine glycosylation is present at Asn-222. The Proton donor role is filled by Asp-261. Cys-263 and Cys-280 are disulfide-bonded. The active site involves His-284. Asn-342 is a glycosylation site (N-linked (GlcNAc...) asparagine). 2 disulfide bridges follow: Cys-391–Cys-397 and Cys-420–Cys-436.

It belongs to the glycosyl hydrolase 28 family.

It is found in the secreted. The protein localises to the cell wall. The enzyme catalyses [(1-&gt;4)-alpha-D-galacturonosyl](n) + H2O = alpha-D-galacturonate + [(1-&gt;4)-alpha-D-galacturonosyl](n-1). Its function is as follows. May function in depolymerizing pectin during pollen development, germination, and tube growth. Acts as an exo-polygalacturonase. This is Exopolygalacturonase clone GBGA483 from Arabidopsis thaliana (Mouse-ear cress).